Here is a 467-residue protein sequence, read N- to C-terminus: tRNA-2-methylthio-N(6)-dimethylallyladenosine synthase (467 aa).

A disordered region spans residues 1–20 (MSDDTTQIEPAMAQETSPRA). Positions 23–143 (RKVFVKTYGC…LPNALARVRG (121 aa)) constitute an MTTase N-terminal domain. [4Fe-4S] cluster is bound by residues Cys-32, Cys-68, Cys-106, Cys-184, Cys-188, and Cys-191. The 233-residue stretch at 170–402 (RKRGVSAFLT…QALLSAQQYA (233 aa)) folds into the Radical SAM core domain. The region spanning 405-467 (DSMIGRKMDV…TNSLIAQKLA (63 aa)) is the TRAM domain.

This sequence belongs to the methylthiotransferase family. MiaB subfamily. Monomer. [4Fe-4S] cluster is required as a cofactor.

It is found in the cytoplasm. It carries out the reaction N(6)-dimethylallyladenosine(37) in tRNA + (sulfur carrier)-SH + AH2 + 2 S-adenosyl-L-methionine = 2-methylsulfanyl-N(6)-dimethylallyladenosine(37) in tRNA + (sulfur carrier)-H + 5'-deoxyadenosine + L-methionine + A + S-adenosyl-L-homocysteine + 2 H(+). Its function is as follows. Catalyzes the methylthiolation of N6-(dimethylallyl)adenosine (i(6)A), leading to the formation of 2-methylthio-N6-(dimethylallyl)adenosine (ms(2)i(6)A) at position 37 in tRNAs that read codons beginning with uridine. The chain is tRNA-2-methylthio-N(6)-dimethylallyladenosine synthase from Brucella melitensis biotype 1 (strain ATCC 23456 / CCUG 17765 / NCTC 10094 / 16M).